A 3526-amino-acid polypeptide reads, in one-letter code: WD repeat and FYVE domain-containing protein 3 (3526 aa).

Ser-1942 and Ser-2278 each carry phosphoserine. The segment at 2285–2981 (LTGSRRNRKE…PHPPKRVRSR (697 aa)) is sufficient for localization to p62 bodies/ALIS. Disordered stretches follow at residues 2403-2429 (ETNVASEIPSKQPETPDDIPQKKPARY) and 2459-2522 (SSEG…EKTD). Positions 2468–2477 (EPEHGEDTIA) are enriched in basic and acidic residues. The residue at position 2492 (Ser-2492) is a Phosphoserine. The BEACH-type PH domain maps to 2531–2656 (EEGEKIQHMY…IRNKVYQRFL (126 aa)). Residues 2586-3526 (MHEPIIPRGA…RGSEDGPRNC (941 aa)) form an interaction with SQSTM1 region. Residues 2683–2976 (GLLSTLVGEK…QLFKKPHPPK (294 aa)) form the BEACH domain. An interaction with ATG5 region spans residues 2981 to 3526 (RLNGDNAGIS…RGSEDGPRNC (546 aa)). WD repeat units lie at residues 3077–3115 (SEWGQILCAICPNPKLVITGGTSTVVCVWEMGTSKEKAK), 3125–3164 (GHTDTVTCATASLAYHIIVSGSRDRTCIIWDLNKLSFLTQ), 3167–3206 (GHRAPVSALCINELTGDIVSCAGTYIHVWSINGNPIVSVN), and 3210–3254 (GRSQ…VPET). Residues 3272 to 3335 (AQIGQEAQDE…SGSDDSRRWS (64 aa)) form a disordered region. Over residues 3278–3290 (AQDEDSSDSEADE) the composition is skewed to acidic residues. The tract at residues 3313–3363 (AASCRATAAWCTDSGSDDSRRWSDQLSLDEKDGFIFVNYSEGQTRAHLQGP) is interaction with GABARAP. Ser-3335 and Ser-3339 each carry phosphoserine. The LC3-interacting region (LIR) motif lies at 3346 to 3349 (FIFV). One copy of the WD 5 repeat lies at 3408–3447 (AHPAEVTALGISKDHSRILVGDSRGRVFSWSVSDQPGRSA). The segment at 3454–3514 (DEGGDSCSGC…VCQNCYYNLQ (61 aa)) adopts an FYVE-type zinc-finger fold. Zn(2+)-binding residues include Cys-3460, Cys-3463, Cys-3476, Cys-3479, Cys-3484, Cys-3487, Cys-3506, and Cys-3509.

In terms of assembly, directly interacts with ATG5 and associates with the ATG12-ATG5-ATG16L complex. Interacts with p62/SQSTM1; this interaction is required to recruit WDFY3 to cytoplasmic bodies and to PML bodies. Directly interacts with GABARAP, GABARAPL1 and GABARAPL2; the interaction with GABARAP is required for WDFY3 recruitment to MAP1LC3B-positive p62/SQSTM1 bodies. Weakly interacts with MAP1LC3C; this interaction is direct. Does not interact with MAP1LC3A, nor MAP1LC3B. Interacts with TRAF6. In terms of tissue distribution, expressed in osteoclast and their mononuclear precursors (at protein level).

It is found in the nucleus membrane. Its subcellular location is the cytoplasm. The protein localises to the cytosol. It localises to the nucleus. The protein resides in the PML body. It is found in the membrane. Its subcellular location is the perikaryon. The protein localises to the cell projection. It localises to the axon. In terms of biological role, required for selective macroautophagy (aggrephagy). Acts as an adapter protein by linking specific proteins destined for degradation to the core autophagic machinery members, such as the ATG5-ATG12-ATG16L E3-like ligase, SQSTM1 and LC3. Along with p62/SQSTM1, involved in the formation and autophagic degradation of cytoplasmic ubiquitin-containing inclusions (p62 bodies, ALIS/aggresome-like induced structures). Along with SQSTM1, required to recruit ubiquitinated proteins to PML bodies in the nucleus. Important for normal brain development. Essential for the formation of axonal tracts throughout the brain and spinal cord, including the formation of the major forebrain commissures. Involved in the ability of neural cells to respond to guidance cues. Required for cortical neurons to respond to the trophic effects of netrin-1/NTN1. Regulates Wnt signaling through the removal of DVL3 aggregates, likely in an autophagy-dependent manner. This process may be important for the determination of brain size during embryonic development. May regulate osteoclastogenesis by acting on the TNFSF11/RANKL - TRAF6 pathway. After cytokinetic abscission, involved in midbody remnant degradation. In vitro strongly binds to phosphatidylinositol 3-phosphate (PtdIns3P). The polypeptide is WD repeat and FYVE domain-containing protein 3 (WDFY3) (Homo sapiens (Human)).